The sequence spans 165 residues: Nucleotide-binding protein PMN2A_1813 (165 aa).

It belongs to the YajQ family.

Functionally, nucleotide-binding protein. This is Nucleotide-binding protein PMN2A_1813 from Prochlorococcus marinus (strain NATL2A).